Here is a 290-residue protein sequence, read N- to C-terminus: UPF0750 membrane protein YpjC (290 aa).

A run of 6 helical transmembrane segments spans residues 9–29 (NIFF…HFNM), 47–67 (ALFH…IFFI), 75–95 (TMFV…SIFQ), 106–126 (DLAL…GIIF), 146–166 (FGIP…ILSL), and 179–199 (LVAV…GYAA).

This sequence belongs to the UPF0750 family.

Its subcellular location is the cell membrane. This Bacillus subtilis (strain 168) protein is UPF0750 membrane protein YpjC (ypjC).